The following is a 163-amino-acid chain: Type II secretion system protein M (163 aa).

Residues 1 to 19 (MMDKLQGWWRSISAREQRL) lie on the Cytoplasmic side of the membrane. The chain crosses the membrane as a helical span at residues 20–40 (VAVGGSCLLIGFCYWIVWQPI). Over 41–163 (ANRIAERERQ…VRRLQLSRPQ (123 aa)) the chain is Periplasmic.

Belongs to the GSP M family. Type II secretion system is composed of four main components: the outer membrane complex, the inner membrane complex, the cytoplasmic secretion ATPase and the periplasm-spanning pseudopilus. Forms homodimers. Interacts with ExeL/GspL. Interacts with ExeE/GspE and ExeF/GspF.

It localises to the cell inner membrane. Its function is as follows. Inner membrane component of the type II secretion system required for the energy-dependent secretion of extracellular factors such as proteases and toxins from the periplasm. Plays a role in the complex assembly and recruits ExeL resulting in a stable complex in the inner membrane. Provides thus a link between the energy-providing ExeE protein in the cytoplasm and the rest of the T2SS machinery. The chain is Type II secretion system protein M (exeM) from Aeromonas hydrophila.